The following is a 228-amino-acid chain: Transmembrane protein 186 (228 aa).

Residues 1-93 (MDMMMMSTRL…RGLRALSRLK (93 aa)) lie on the Mitochondrial matrix side of the membrane. Residues 94–112 (LLQTGITVVLLPTVYYLHL) traverse the membrane as a helical segment. Residues 113-118 (QGQASV) lie on the Mitochondrial intermembrane side of the membrane. A helical membrane pass occupies residues 119–141 (LVLNRSIGIALFAGVMLYSISHF). Residues 142–228 (VRRVVGMMYL…AFGKVFGSLS (87 aa)) are Mitochondrial matrix-facing.

This sequence belongs to the TMEM186 family.

The protein resides in the mitochondrion inner membrane. Its function is as follows. May be required for efficient assembly of the mitochondrial complex I. The chain is Transmembrane protein 186 from Danio rerio (Zebrafish).